The following is a 168-amino-acid chain: mRNA stability protein IGO1 (168 aa).

Residues 1–13 (MSNENLSPNSSNP) show a composition bias toward low complexity. Residues 1–31 (MSNENLSPNSSNPDLTKLNNGESGTIDTSKF) form a disordered region. Polar residues predominate over residues 17–31 (KLNNGESGTIDTSKF). Residues Ser-32 and Ser-64 each carry the phosphoserine modification. The segment at 125 to 168 (KEGSISSGPPSSNNGTIGGGSTSSTPVGNHSSSSSSLYTESPIR) is disordered. Composition is skewed to low complexity over residues 127–139 (GSIS…SNNG) and 146–168 (TSST…SPIR).

This sequence belongs to the endosulfine family. In terms of assembly, interacts with RIM15, DHH1, PBP1, PBP4 and LSM12. Phosphorylated at Ser-64 by RIM15.

Required for TORC1 to properly control gene expression and chronological life span. Plays an essential role in initiation of the G0 program by preventing the degradation of specific nutrient-regulated mRNAs via the 5'-3' mRNA decay pathway. The sequence is that of mRNA stability protein IGO1 (IGO1) from Saccharomyces cerevisiae (strain ATCC 204508 / S288c) (Baker's yeast).